We begin with the raw amino-acid sequence, 879 residues long: Leucine--tRNA ligase (879 aa).

Positions 45-55 (PYPSGALHMGH) match the 'HIGH' region motif. Residues 637 to 641 (KMSKS) carry the 'KMSKS' region motif. K640 contacts ATP.

This sequence belongs to the class-I aminoacyl-tRNA synthetase family.

The protein localises to the cytoplasm. The enzyme catalyses tRNA(Leu) + L-leucine + ATP = L-leucyl-tRNA(Leu) + AMP + diphosphate. The protein is Leucine--tRNA ligase of Xylella fastidiosa (strain 9a5c).